The following is a 378-amino-acid chain: Carbamoyl phosphate synthase small chain (378 aa).

Positions 1–188 (MLPSFPPAIL…LGRGYGVQDK (188 aa)) are CPSase. 3 residues coordinate L-glutamine: Ser50, Gly240, and Gly242. The region spanning 192–378 (HVVAYDFGVK…FTAAMAERKQ (187 aa)) is the Glutamine amidotransferase type-1 domain. Catalysis depends on Cys268, which acts as the Nucleophile. Leu269, Gln272, Asn310, Gly312, and Phe313 together coordinate L-glutamine. Residues His352 and Glu354 contribute to the active site.

Belongs to the CarA family. As to quaternary structure, composed of two chains; the small (or glutamine) chain promotes the hydrolysis of glutamine to ammonia, which is used by the large (or ammonia) chain to synthesize carbamoyl phosphate. Tetramer of heterodimers (alpha,beta)4.

It carries out the reaction hydrogencarbonate + L-glutamine + 2 ATP + H2O = carbamoyl phosphate + L-glutamate + 2 ADP + phosphate + 2 H(+). The enzyme catalyses L-glutamine + H2O = L-glutamate + NH4(+). It functions in the pathway amino-acid biosynthesis; L-arginine biosynthesis; carbamoyl phosphate from bicarbonate: step 1/1. Its pathway is pyrimidine metabolism; UMP biosynthesis via de novo pathway; (S)-dihydroorotate from bicarbonate: step 1/3. Functionally, small subunit of the glutamine-dependent carbamoyl phosphate synthetase (CPSase). CPSase catalyzes the formation of carbamoyl phosphate from the ammonia moiety of glutamine, carbonate, and phosphate donated by ATP, constituting the first step of 2 biosynthetic pathways, one leading to arginine and/or urea and the other to pyrimidine nucleotides. The small subunit (glutamine amidotransferase) binds and cleaves glutamine to supply the large subunit with the substrate ammonia. The polypeptide is Carbamoyl phosphate synthase small chain (Ralstonia nicotianae (strain ATCC BAA-1114 / GMI1000) (Ralstonia solanacearum)).